Reading from the N-terminus, the 296-residue chain is Endochitinase 3 (296 aa).

Residues 12–296 (HKLTVYWGAE…VKNGQLPEED (285 aa)) form the GH18 domain. Asn-32 and Asn-152 each carry an N-linked (GlcNAc...) asparagine glycan. Glu-153 acts as the Proton donor in catalysis. The N-linked (GlcNAc...) asparagine glycan is linked to Asn-228.

The protein belongs to the glycosyl hydrolase 18 family. Chitinase class III subfamily.

The protein localises to the secreted. The catalysed reaction is Random endo-hydrolysis of N-acetyl-beta-D-glucosaminide (1-&gt;4)-beta-linkages in chitin and chitodextrins.. Its function is as follows. Secreted chitinase involved in the degradation of chitin, a component of the cell walls of fungi and exoskeletal elements of some animals (including worms and arthropods). Participates in the infection process and directly acts in the penetration process of the host cuticle. Involved in heat-shock adaptation. The protein is Endochitinase 3 (chi3) of Metarhizium anisopliae (Entomophthora anisopliae).